A 424-amino-acid polypeptide reads, in one-letter code: Probable serine/threonine-protein kinase PBL12 (424 aa).

One can recognise a Protein kinase domain in the interval 88–368 (FSRSNMLGEG…CEVVKVLESI (281 aa)). ATP contacts are provided by residues 94–102 (LGEGGFGPV) and K123. The active-site Proton acceptor is the D218.

It belongs to the protein kinase superfamily. Ser/Thr protein kinase family. As to expression, expressed specifically in roots.

Its subcellular location is the cell membrane. The catalysed reaction is L-seryl-[protein] + ATP = O-phospho-L-seryl-[protein] + ADP + H(+). It carries out the reaction L-threonyl-[protein] + ATP = O-phospho-L-threonyl-[protein] + ADP + H(+). May play a role in the signal transduction pathway of osmotic stress. May be involved in plant defense signaling. The sequence is that of Probable serine/threonine-protein kinase PBL12 from Arabidopsis thaliana (Mouse-ear cress).